A 363-amino-acid chain; its full sequence is MKIGVFVPIGNNGWLISTHAPQYMPTFELNKAIVQKAEHYHFDFALSMIKLRGFGGKTEFWDHNLESFTLMAGLAAVTSRIQIYATAATLTLPPAIVARMAATIDSISGGRFGVNLVTGWQKPEYEQMGIWPGDDYFSRRYDYLTEYVQVLRDLWGTGKSDFKGDFFTMNDCRVSPQPSVPMKVICAGQSDAGMAFSAQYADFNFCFGKGVNTPTAFAPTAARMKQAAEQTGRDVGSYVLFMVIADETDDAARAKWEHYKAGADEEALSWLTEQSQKDTRSGTDTNVRQMADPTSAVNINMGTLVGSYASVARMLDEVASVPGAEGVLLTFDDFLSGIETFGERIQPLMQCRAHLPALTQEVA.

FMN contacts are provided by residues 49-50 (IK), asparagine 115, glutamate 124, 140-141 (RY), and serine 190.

The protein belongs to the NtaA/SnaA/DszA monooxygenase family. RutA subfamily.

It catalyses the reaction uracil + FMNH2 + NADH + O2 = (Z)-3-ureidoacrylate + FMN + NAD(+) + H2O + H(+). It carries out the reaction thymine + FMNH2 + NADH + O2 = (Z)-2-methylureidoacrylate + FMN + NAD(+) + H2O + H(+). Functionally, catalyzes the pyrimidine ring opening between N-3 and C-4 by an unusual flavin hydroperoxide-catalyzed mechanism, adding oxygen atoms in the process to yield ureidoacrylate peracid, that immediately reacts with FMN forming ureidoacrylate and FMN-N(5)-oxide. The FMN-N(5)-oxide reacts spontaneously with NADH to produce FMN. Requires the flavin reductase RutF to regenerate FMN in vivo. The polypeptide is Pyrimidine monooxygenase RutA (Escherichia coli O103:H2 (strain 12009 / EHEC)).